A 227-amino-acid chain; its full sequence is UPF0173 metal-dependent hydrolase BCG9842_B0515 (227 aa).

Belongs to the UPF0173 family.

The sequence is that of UPF0173 metal-dependent hydrolase BCG9842_B0515 from Bacillus cereus (strain G9842).